The primary structure comprises 312 residues: DNA-directed RNA polymerase subunit alpha (312 aa).

An alpha N-terminal domain (alpha-NTD) region spans residues 1-229 (MLQYQIDRID…ELFQPLATVS (229 aa)). Residues 239-312 (EPAAEAQIPL…ISIPQSRTSA (74 aa)) form an alpha C-terminal domain (alpha-CTD) region.

This sequence belongs to the RNA polymerase alpha chain family. In cyanobacteria the RNAP catalytic core is composed of 2 alpha, 1 beta, 1 beta', 1 gamma and 1 omega subunit. When a sigma factor is associated with the core the holoenzyme is formed, which can initiate transcription.

It carries out the reaction RNA(n) + a ribonucleoside 5'-triphosphate = RNA(n+1) + diphosphate. DNA-dependent RNA polymerase catalyzes the transcription of DNA into RNA using the four ribonucleoside triphosphates as substrates. This is DNA-directed RNA polymerase subunit alpha from Prochlorococcus marinus (strain NATL1A).